A 205-amino-acid chain; its full sequence is Large ribosomal subunit protein uL4 (205 aa).

The protein belongs to the universal ribosomal protein uL4 family. In terms of assembly, part of the 50S ribosomal subunit.

In terms of biological role, one of the primary rRNA binding proteins, this protein initially binds near the 5'-end of the 23S rRNA. It is important during the early stages of 50S assembly. It makes multiple contacts with different domains of the 23S rRNA in the assembled 50S subunit and ribosome. Functionally, forms part of the polypeptide exit tunnel. This chain is Large ribosomal subunit protein uL4, found in Roseobacter denitrificans (strain ATCC 33942 / OCh 114) (Erythrobacter sp. (strain OCh 114)).